Here is a 2244-residue protein sequence, read N- to C-terminus: MSGLLPSLSSSFPLVQSEALGMPRTHGPKPSENDPKEPTCSPSPAFYSVNGEMKDYKLMALELEDKSVLQGYSFGADHSVSGELVFQTGMVGYPESLTDPSYRGQILVFTFPTVGNYGVPDRRILDEISGLPKYFESNQIHVAAIIISSYSQNYSHFLAHSSLGEWLKEQGIPGIFGIDTRALTKKIRDQGSMLGRLLIQKDESPINPSSITGLGKDWSTAFEDIPWKNPNTENLTSQVSIKEPKLYEPHPTTAIKKADGKIIRILVIDVGMKYNQIRCFLNRGVELLVVPWDYDFTKETYDGLFISNGPGDPSLMDLVVDRVKRVLESKTVPVFGICFGHQIMARAAGASTTKMKFGNRGHNIPCTCMISGRCYITSQNHGYAVDASSLSNGWKELFVNANDGSNEGIYNTEYPFFSVQFHPESTPGPRDTEFLFDVFIDVVKRSADAKSLQPFKLPGGTIEENRSRHPLVDAKRVLILGSGGLSIGQAGEFDYSGSQAIKALREEGIYTILINPNIATIQTSKGLADKVYFLPVNADFVRKVIKQERPDSIYVTFGGQTALNVGIELKDEFEQLGVKVLGTPIDTIITTEDRELFARAMDEINEKCAKSASASSIEEAIKVSKDISFPVIVRAAYALGGLGSGFADNEAELIDLCTLAFATSPQVLIERSMKGWKEIEYEVVRDAFDNCITVCNMENFDPLGIHTGDSIVVAPSQTLTDEDYNMLRTTAVNVIRHLGVVGECNIQYALNPFTKEYCIIEVNARLSRSSALASKATGYPLAFTAAKLGLNIPLNEVKNSVTKVTCACFEPSLDYVVVKIPRWDLKKFTRVSTQLSSAMKSVGEVMSIGRTFEEAIQKAIRAIDYSNTGFNVKDALMSIDTELQTPSDQRLFAIANAMASGYSVDRIWELTRIDKWFLEKLMGLIRTSQLISKHDISSLPISLLKTAKQLGFADVQIAAFMNSTELAVRRIRTEAGIRPFVKQIDTVAAEFPAFTNYLYTTYNAVEHDIHFNDKGVMVLGSGVYRIGSSVEFDWCAVRAVRTLRDRGVKTIMVNYNPETVSTDYDEADRLYFENIGLETVLDIYEQESSSGIIIAMGGQTANNIALPLHRENVKILGTSPEMIDGAENRFKFSRMLDDIGVDQPKWKELTSFDEADKFCDTVGYPVLVRPSYVLSGAAMNTVYSQSDLHSYLQQAVAINKDHPVVISKYIENAKEIELDAVAREGKMVMHVISEHVENAGVHSGDATLVLPPQDLAPTTIERIVDAAAKIGEALNITGPYNIQFIAKDNEIKVIECNVRASRSFPFVSKVIGVDMISMATDVIMGNPIQPYPDVDLPRDYVAVKVPQFSFSRLSGADPVLGVEMASTGEVACFGHNKFEAYLKAMISTGFRLPKKNILISIGSYKEKAELLPYVKKLYENNYNIFATAGTSDYFMESGVPCKYLADLPAEEANNEYSLSAHLANNMIDMYINLPSNNRYRRPANYISSGYKSRRLAIDYSVPLVTNVKCAKLMIEAICRNLDFSLSTVDFQSSFQTANLPGLINISAFLPEFTSEAVSDYTKECIASGFTMARFLPFSTSSTLADKDSLSAVKKLALDHAHCDYNFSVIASSTNEVTISELTSESGCLFFHFEKDDSGIDHVTAVASHFNVWPDTQTVMTDAKSTTLASLLLLASLHNRRIHITNVSSKDDLNLIVLAKQRSLPVTFDVSVYSLFLNQNDYPGATFLPTADDQVEIWNKLSYIDCFSIGSIPSRLAKFVGNTAFTGFGVREAIPLLLTAVNEGRLTLKDVVDRFYSNPKAIFRLHDQDDSGVQLEVDRSVSWSSKDWTPFNGKKLYGSIQSVQFDGHDVFFDGELNFEHTYGRDYSSASLADKSKATRKVSALMSPGLPHAAPSLAEAFGQAPENKAHPDISLNMTPNFKPSHELVQLINSSPFYRKHIISVHQVTRSDLHVLFAIAHQMRIIVERQGVIDLCYGKLLCTMFFEPSTRTSSSFDAAMQRLGGKVVAVTASASSVNKGESLADTIRTLGCYGDAIVLRHPSIESARIAANFSPVPIINGGNGSKEHPTQAFLDLYTIREELGSVNGLTITFIGDLKYGRTVHSLARLLAFWHVELHLVSPEQLALPDDVKDDIRANGLNFIEHRELTKEVVAQSDVLYCTRVQKERFASVDEYEKLKDSFIVDNSVLASAKSHCIVMHPLPRNREISEEVDFDQRRAAYFRQMRYGLYIRMALLACVMGATEVAN.

The interval Met1–Asp437 is GATase (Glutamine amidotransferase). Positions Gln16–Pro44 are disordered. Ser101, Gly309, and Gly311 together coordinate L-glutamine. The region spanning Arg264–Ala449 is the Glutamine amidotransferase type-1 domain. The Nucleophile; for GATase activity role is filled by Cys338. Residues Gln342, Asn380, Gly382, and Tyr383 each contribute to the L-glutamine site. Active-site for GATase activity residues include His422 and Glu424. The interval Val438–Val477 is linker. Residues Leu478 to Lys1014 form a CPSase A region. Residues Leu478 to Ile1514 are CPSase (Carbamoyl phosphate synthase). Positions 594, 634, 640, 641, 671, 673, 678, 704, 705, 706, 747, and 761 each coordinate ATP. Residues Ala598–Leu790 enclose the ATP-grasp 1 domain. Mg(2+) contacts are provided by Gln747, Glu761, and Asn763. Mn(2+) is bound by residues Gln747, Glu761, and Asn763. The interval Gly1015–Ile1514 is CPSase B. Ser1119 is subject to Phosphoserine. One can recognise an ATP-grasp 2 domain in the interval Ser1133–Met1324. Positions 1169, 1208, 1210, 1215, 1240, 1241, 1242, 1243, 1283, and 1295 each coordinate ATP. Residues Gln1283, Glu1295, and Asn1297 each contribute to the Mg(2+) site. 3 residues coordinate Mn(2+): Gln1283, Glu1295, and Asn1297. The MGS-like domain maps to Phe1390–Phe1552. Positions Glu1515 to Ser1524 are linker. Residues Leu1525–Gly1853 are defective DHOase domain. The segment at Glu1854 to Tyr1935 is linker. A phosphoserine mark is found at Ser1881 and Ser1885. The segment at Arg1936 to Asn2244 is ATCase (Aspartate transcarbamylase). The carbamoyl phosphate site is built by Arg1988 and Thr1989. Lys2016 contacts L-aspartate. 3 residues coordinate carbamoyl phosphate: Arg2037, His2065, and Gln2068. Residues Arg2098 and Arg2160 each coordinate L-aspartate. Carbamoyl phosphate-binding residues include Leu2199 and Pro2200.

In the N-terminal section; belongs to the CarA family. It in the 2nd section; belongs to the CarB family. The protein in the 3rd section; belongs to the metallo-dependent hydrolases superfamily. DHOase family. CAD subfamily. This sequence in the C-terminal section; belongs to the aspartate/ornithine carbamoyltransferase superfamily. ATCase family. It depends on Mg(2+) as a cofactor. Mn(2+) serves as cofactor.

The catalysed reaction is hydrogencarbonate + L-glutamine + 2 ATP + H2O = carbamoyl phosphate + L-glutamate + 2 ADP + phosphate + 2 H(+). It carries out the reaction L-glutamine + H2O = L-glutamate + NH4(+). The enzyme catalyses hydrogencarbonate + NH4(+) + 2 ATP = carbamoyl phosphate + 2 ADP + phosphate + 2 H(+). It catalyses the reaction carbamoyl phosphate + L-aspartate = N-carbamoyl-L-aspartate + phosphate + H(+). The protein operates within pyrimidine metabolism; UMP biosynthesis via de novo pathway; (S)-dihydroorotate from bicarbonate: step 1/3. It participates in pyrimidine metabolism; UMP biosynthesis via de novo pathway; (S)-dihydroorotate from bicarbonate: step 2/3. With respect to regulation, both CPSase and ATCase activities are feedback inhibited by the end product UTP. Multifunctional protein that encodes the first 2 enzymatic activities of the de novo pyrimidine pathway: carbamoylphosphate synthetase (CPSase; EC 6.3.5.5) and aspartate transcarbamylase (ATCase; EC 2.1.3.2). The CPSase-function is accomplished in 2 steps, by a glutamine-dependent amidotransferase activity (GATase) that binds and cleaves glutamine to produce ammonia, followed by an ammonium-dependent carbamoyl phosphate synthetase, which reacts with the ammonia, hydrogencarbonate and ATP to form carbamoyl phosphate. The endogenously produced carbamoyl phosphate is sequestered and channeled to the ATCase active site. ATCase then catalyzes the formation of carbamoyl-L-aspartate from L-aspartate and carbamoyl phosphate. The polypeptide is Multifunctional protein ura1 (ura1) (Schizosaccharomyces pombe (strain 972 / ATCC 24843) (Fission yeast)).